The following is a 496-amino-acid chain: Cytochrome P450 71D181 (496 aa).

The helical; Signal-anchor for type II membrane protein transmembrane segment at 1–21 threads the bilayer; it reads MDISISWVAIILVISSYFIFM. Position 435 (Cys435) interacts with heme. The tract at residues 471–496 is disordered; sequence MSETPGLSGPRKNPLIMVPTIHNPTS.

It belongs to the cytochrome P450 family. Heme serves as cofactor. Expressed at low levels in flowers, leaves and stems.

It localises to the membrane. It catalyses the reaction alpha-terpinene + 2 reduced [NADPH--hemoprotein reductase] + 2 O2 = carvacrol + 2 oxidized [NADPH--hemoprotein reductase] + 3 H2O + 2 H(+). The catalysed reaction is gamma-terpinene + 2 reduced [NADPH--hemoprotein reductase] + 2 O2 = carvacrol + 2 oxidized [NADPH--hemoprotein reductase] + 3 H2O + 2 H(+). The enzyme catalyses (4S)-limonene + reduced [NADPH--hemoprotein reductase] + O2 = (1S,5R)-carveol + oxidized [NADPH--hemoprotein reductase] + H2O + H(+). It carries out the reaction (4R)-limonene + reduced [NADPH--hemoprotein reductase] + O2 = (1R,5S)-carveol + oxidized [NADPH--hemoprotein reductase] + H2O + H(+). The protein operates within secondary metabolite biosynthesis; terpenoid biosynthesis. Functionally, involved in the biosynthesis of phenolic monoterpenes natural products thymol and carvacrol which have a broad range of biological activities acting as antimicrobial compounds, insecticides, antioxidants and pharmaceutical agents. Catalyzes the C2-hydroxylation of gamma-terpinene and alpha-terpinene to produce carvacrol. Also mediates the C6-hydroxylation of (4S)-limonene and (4R)-limonene to form carveol. The sequence is that of Cytochrome P450 71D181 from Origanum vulgare (Wild marjoram).